A 426-amino-acid polypeptide reads, in one-letter code: MHDIRLIRDNPHAFDAGLARRGLAPLSAEILAADAELRALQTDIQAALARRNEASKLIGQAMAAGDKDKAEALKAEVAALKAALPAREEAERAQLAALHDRLAALPNLPADDVPDGEDEAGNVELSRWGTPRSFDFTPLEHADFAPALGLDFETAAKMSGARFAFLKGPMARLERALGQFMLDRQTIEAGYTECATPLLVRDDAAFGTTQLPKFREDLFQTTDGLWLISTSEMSLTNAVREQILAEADLPIRMTALTPCFRSEAGSAGRDTRGYIRQHQFWKVELVSITRPEDSDAELERKTRAAESILEALELPYRKMLLCAGDMGFAARKTYDLEVWLPGQNAYREISSCSNCGDFQARRMNARFRREGGKGNEFVHTLNGSGLAVGRTLVAILENYQQADGSVDIPAALLPYMGGITRLTPLG.

L-serine is bound at residue 230 to 232 (TSE). 261-263 (RSE) lines the ATP pocket. Residue Glu284 participates in L-serine binding. An ATP-binding site is contributed by 348–351 (EISS). Residue Ser384 coordinates L-serine.

Belongs to the class-II aminoacyl-tRNA synthetase family. Type-1 seryl-tRNA synthetase subfamily. Homodimer. The tRNA molecule binds across the dimer.

It localises to the cytoplasm. The enzyme catalyses tRNA(Ser) + L-serine + ATP = L-seryl-tRNA(Ser) + AMP + diphosphate + H(+). It carries out the reaction tRNA(Sec) + L-serine + ATP = L-seryl-tRNA(Sec) + AMP + diphosphate + H(+). It functions in the pathway aminoacyl-tRNA biosynthesis; selenocysteinyl-tRNA(Sec) biosynthesis; L-seryl-tRNA(Sec) from L-serine and tRNA(Sec): step 1/1. Functionally, catalyzes the attachment of serine to tRNA(Ser). Is also able to aminoacylate tRNA(Sec) with serine, to form the misacylated tRNA L-seryl-tRNA(Sec), which will be further converted into selenocysteinyl-tRNA(Sec). The protein is Serine--tRNA ligase of Sphingopyxis alaskensis (strain DSM 13593 / LMG 18877 / RB2256) (Sphingomonas alaskensis).